An 86-amino-acid chain; its full sequence is YcgL domain-containing protein Smlt4554 (86 aa).

The 85-residue stretch at Met1–Tyr85 folds into the YcgL domain.

In Stenotrophomonas maltophilia (strain K279a), this protein is YcgL domain-containing protein Smlt4554.